An 845-amino-acid polypeptide reads, in one-letter code: MSSAGGEGPEAGPGRAGGRSEPEAPGSALSVDLPGLLGQLARSFALLLPVYALGYLGLSFSWVLLALGLLAWCRRSRGLKASRLCRALALLEDEEQAVRLGVRACDLPAWVHFPDTERAEWLNKTVKHMWPFICQFIEKLFRETIEPAVRGANAHLSTFSFTKVDVGQQPLRVNGVKVYTENVDKRQIILDLQISFVGNCEIDLEIKRYFCRAGVKSIQIHGTMRVILEPLIGDMPLVGALSIFFLRKPLLEINWTGLTNLLDIPGLNGLSDTIILDIISNYLVLPNRITVPLVSEVQIAQLRFPIPKGVLRIHFIEAQDLQGKDTYLKGLVKGKSDPYGIIRVGNQIFQSKVIKENLSPKWNEVYEALVYEHPGQELEIELFDEDPDKDDFLGSLMIDLIEVEKERLLDEWFTLDEVPKGKLHLKLEWLTLMPDAANLDKVLADIRADKDQASDGLSSALLILYLDSARNLPSGKKINSNPNPLVQMSVGHKAQESKIRYKTSEPVWEENFTFFIHNPRRQDLEVEVKDEQHQCSLGSLRIPLSQLLTSDNMTINQRFQLSNSGPNSTLKMKIALRVLHLEKQERPPDYQHSAQVKRPSVSKEGRKMPIKSQMSASPGTGGANTAPSTPVMGVDDKPAMEEKPQPPEASPLGHRDLGRSSSSLLASPSHIAAKEPTPSIASDISLPIATQELRQRLRQLENGTTLGQSPLGQIQLTIRHSSQRNKLIVVVHSCRNLIAFSEDGSDPYVRMYLLPDKRRSGRRKTHVSKKTLNPVFDQSFDFSVSLPEVQRRTLDVAVKNSGGFLSKDKGLLGKVLVVLASEELAKGWTQWYDLTEDGTRPQVIT.

Positions 1–17 (MSSAGGEGPEAGPGRAG) are enriched in gly residues. Residues 1–26 (MSSAGGEGPEAGPGRAGGRSEPEAPG) form a disordered region. Residues 1-27 (MSSAGGEGPEAGPGRAGGRSEPEAPGS) lie on the Cytoplasmic side of the membrane. Residues 28–48 (ALSVDLPGLLGQLARSFALLL) form a helical membrane-spanning segment. At 49-51 (PVY) the chain is on the lumenal side. Residues 52-72 (ALGYLGLSFSWVLLALGLLAW) traverse the membrane as a helical segment. Topologically, residues 73–845 (CRRSRGLKAS…EDGTRPQVIT (773 aa)) are cytoplasmic. An SMP-LTD domain is found at 115–294 (DTERAEWLNK…LPNRITVPLV (180 aa)). 2 C2 domains span residues 293–413 (LVSE…DEWF) and 442–563 (VLAD…QLSN). Residues Lys324, Asp325, Asp337, Asp384, Glu385, Asp386, Asp388, Asp390, and Asp391 each coordinate Ca(2+). The segment at 584–664 (QERPPDYQHS…RDLGRSSSSL (81 aa)) is disordered. Residues 612–628 (SQMSASPGTGGANTAPS) are compositionally biased toward polar residues. Phosphoserine is present on residues Ser615 and Ser617. Thr629 bears the Phosphothreonine mark. The span at 634–645 (VDDKPAMEEKPQ) shows a compositional bias: basic and acidic residues. A phosphoserine mark is found at Ser660, Ser662, Ser663, Ser667, Ser679, Ser682, and Ser685. The C2 3 domain occupies 710–832 (PLGQIQLTIR…ELAKGWTQWY (123 aa)). A required for phosphatidylinositol 4,5-bisphosphate-dependent location at the cell membrane region spans residues 757–764 (KRRSGRRK).

Belongs to the extended synaptotagmin family. Homodimer. Interacts with ESYT1 and ESYT3. Interacts with FGFR1 that has been activated by FGF1 binding. Interacts with the AP-2 complex; identified in a complex with the AP-2 complex and FGFR1.

It localises to the cell membrane. Its subcellular location is the endoplasmic reticulum membrane. In terms of biological role, tethers the endoplasmic reticulum to the cell membrane and promotes the formation of appositions between the endoplasmic reticulum and the cell membrane. Binds glycerophospholipids in a barrel-like domain and may play a role in cellular lipid transport. Plays a role in FGF signaling via its role in the rapid internalization of FGFR1 that has been activated by FGF1 binding; this occurs most likely via the AP-2 complex. Promotes the localization of SACM1L at endoplasmic reticulum-plasma membrane contact sites (EPCS). This chain is Extended synaptotagmin-2 (Esyt2), found in Mus musculus (Mouse).